Consider the following 614-residue polypeptide: UvrABC system protein C (614 aa).

Residues T14 to I91 form the GIY-YIG domain. Positions D196 to L231 constitute a UVR domain. A disordered region spans residues L595–P614. The span at A599–P614 shows a compositional bias: basic and acidic residues.

The protein belongs to the UvrC family. As to quaternary structure, interacts with UvrB in an incision complex.

The protein resides in the cytoplasm. The UvrABC repair system catalyzes the recognition and processing of DNA lesions. UvrC both incises the 5' and 3' sides of the lesion. The N-terminal half is responsible for the 3' incision and the C-terminal half is responsible for the 5' incision. This chain is UvrABC system protein C, found in Streptococcus pneumoniae serotype 2 (strain D39 / NCTC 7466).